Reading from the N-terminus, the 252-residue chain is MNPAIDLNCDMGESYGAWRMGNDEAVLQFVTSANIACGFHGGDPSTMRQTVAAALAHGVALGAHPSLPDLAGFGRRAMQITPQEAYDLVVYQVGALAGVAASQGARLHHVKAHGALYNMAAKDAALARAICQAVRDVDSDLVLYGLAGSALIDAARAIGLRAAQEVFADRTYQADGQLTPRSQPDAMITDLDQAIAQVLGMVRDGSVRTPDGQTVALQADTLCIHGDQPDALVFARGIRLALERDGIAIQAA.

Belongs to the LamB/PxpA family. Forms a complex composed of PxpA, PxpB and PxpC.

It catalyses the reaction 5-oxo-L-proline + ATP + 2 H2O = L-glutamate + ADP + phosphate + H(+). In terms of biological role, catalyzes the cleavage of 5-oxoproline to form L-glutamate coupled to the hydrolysis of ATP to ADP and inorganic phosphate. The polypeptide is 5-oxoprolinase subunit A (Bordetella pertussis (strain Tohama I / ATCC BAA-589 / NCTC 13251)).